An 81-amino-acid polypeptide reads, in one-letter code: Penaeidin-3j (81 aa).

A signal peptide spans 1–19 (MRLVVCLVFLASFALVCQG). Q20 is subject to Pyrrolidone carboxylic acid. Disulfide bonds link C50–C65, C54–C72, and C66–C73. A Serine amide modification is found at S80.

This sequence belongs to the penaeidin family.

Its subcellular location is the cytoplasmic granule. Functionally, antibacterial and antifungal activity. Presents chitin-binding activity. In Penaeus vannamei (Whiteleg shrimp), this protein is Penaeidin-3j.